The chain runs to 366 residues: Glucose 1-dehydrogenase (366 aa).

Zn(2+) is bound at residue Cys-39. Position 41 (Thr-41) interacts with substrate. Zn(2+) is bound by residues His-66 and Glu-67. Asn-89 contributes to the substrate binding site. The Zn(2+) site is built by Cys-93, Cys-96, Cys-99, and Cys-107. Residues Glu-114, Gln-150, and Asp-154 each coordinate substrate. Gln-150 is a binding site for Zn(2+). NADP(+)-binding positions include 189–192 (TGPI), 211–213 (NRR), 277–279 (FGF), 305–307 (LVN), and Lys-354. Asn-307 is a binding site for substrate.

It belongs to the zinc-containing alcohol dehydrogenase family. Glucose 1-dehydrogenase subfamily. Homotetramer. Requires Zn(2+) as cofactor.

The catalysed reaction is D-glucose + NAD(+) = D-glucono-1,5-lactone + NADH + H(+). It catalyses the reaction D-glucose + NADP(+) = D-glucono-1,5-lactone + NADPH + H(+). The enzyme catalyses D-galactose + NAD(+) = D-galactono-1,4-lactone + NADH + H(+). It carries out the reaction D-galactose + NADP(+) = D-galactono-1,5-lactone + NADPH + H(+). The catalysed reaction is an aldopyranose + NAD(+) = aldono-1,5-lactone + NADH + H(+). It catalyses the reaction an aldopyranose + NADP(+) = aldono-1,5-lactone + NADPH + H(+). Inhibited by EDTA in vitro. Catalyzes the NAD(P)(+)-dependent oxidation of D-glucose to D-gluconate via gluconolactone. Displays broad substrate specificity since it is able to catalyze the oxidation of a number of alternative aldose sugars, such as D-galactose, D-xylose and L-arabinose, to the corresponding glyconate. Can utilize both NAD(+) and NADP(+) as electron acceptor. Physiologically, seems to be involved in the degradation of both glucose and galactose through a non-phosphorylative variant of the Entner-Doudoroff pathway. The protein is Glucose 1-dehydrogenase of Saccharolobus solfataricus (Sulfolobus solfataricus).